The sequence spans 245 residues: tRNA (guanine-N(1)-)-methyltransferase (245 aa).

Residues G111 and 131 to 136 each bind S-adenosyl-L-methionine; that span reads IGDYVL.

The protein belongs to the RNA methyltransferase TrmD family. As to quaternary structure, homodimer.

Its subcellular location is the cytoplasm. The enzyme catalyses guanosine(37) in tRNA + S-adenosyl-L-methionine = N(1)-methylguanosine(37) in tRNA + S-adenosyl-L-homocysteine + H(+). In terms of biological role, specifically methylates guanosine-37 in various tRNAs. The polypeptide is tRNA (guanine-N(1)-)-methyltransferase (Staphylococcus haemolyticus (strain JCSC1435)).